The primary structure comprises 1588 residues: Paternally-expressed gene 3 protein (1588 aa).

The SCAN box domain maps to 46-128; that stretch reads HQRFRNLIYV…TLLENYKEMY (83 aa). 3 disordered regions span residues 128-231, 265-304, and 317-347; these read YQPE…YQNV, GHSH…RRGI, and KFIK…MSDD. The span at 129-142 shows a compositional bias: acidic residues; the sequence is QPEDDNNSDVTSDD. Basic and acidic residues-rich tracts occupy residues 143–152, 160–181, 205–224, and 293–304; these read DMTRNRRESS, FSDR…DRWS, FEMD…RSQD, and PEAKKSTHRRGI. 3 C2H2-type zinc fingers span residues 452-474, 505-527, and 563-585; these read YVCD…QIMH, FECK…RKIH, and YECR…QKIH. Residues 588 to 607 show a composition bias toward basic and acidic residues; that stretch reads DDKDNEREHERERERERGET. The segment at 588-608 is disordered; it reads DDKDNEREHERERERERGETF. The C2H2-type 4 zinc-finger motif lies at 627 to 649; it reads YECKVCGETFLHSSSLKEHQKIH. Disordered stretches follow at residues 839-889 and 905-929; these read VASK…SKNR and QKSV…SSNV. The segment covering 868–881 has biased composition (basic and acidic residues); that stretch reads LNDKRQKIPARENP. The C2H2-type 5 zinc finger occupies 969 to 991; it reads YECQECGECFAHSSDLTEHQKIH. The tract at residues 1056 to 1104 is disordered; the sequence is EKSHGEESQGENTDGEETHSEETHGQETIEDPVIQGSDMEDPQKDDPDD. Positions 1071–1082 are enriched in basic and acidic residues; that stretch reads EETHSEETHGQE. 5 C2H2-type zinc fingers span residues 1107–1129, 1163–1185, 1225–1247, 1282–1304, and 1332–1354; these read YECE…QKVH, YECP…QRIH, IRCL…MRLH, FECA…VTVH, and YECK…KELH. Acidic residues predominate over residues 1396 to 1415; the sequence is EPEVEAAEPEVEAAEPEVEA. The segment at 1396 to 1495 is disordered; sequence EPEVEAAEPE…GIEDPEEGED (100 aa). 7 tandem repeats follow at residues 1397-1403, 1404-1410, 1411-1417, 1418-1422, 1425-1429, 1432-1436, and 1439-1443. The tract at residues 1397-1417 is 3 X 7 AA repeat of P-E-V-E-A-A-E; it reads PEVEAAEPEVEAAEPEVEAAE. Residues 1418-1443 form a 4 X 5 AA repeat of P-X-G-E-A region; sequence PNGEAEGPDGEAAEPIGEAGQPNGEA. Composition is skewed to acidic residues over residues 1449–1466 and 1475–1495; these read DADE…ERAE and PEGD…EGED. 2 consecutive C2H2-type zinc fingers follow at residues 1505–1527 and 1564–1586; these read YDCH…LKTH and FKCD…QNTH.

It belongs to the krueppel C2H2-type zinc-finger protein family. Homodimer. Interacts with SIAH1A and SIAH2. Interacts with TRAF2. Brain, glial cells, astrocytes, embryo, placenta, testis, ovary and uterus. In the placenta it is found in the layer of villous cytotrophoblast cells while in the ovary it is found in the cells of the ovarian stroma including the thecal layers around the follicles. Expression is highly repressed in glioma cell lines.

The protein resides in the nucleus. Its subcellular location is the cytoplasm. In terms of biological role, induces apoptosis in cooperation with SIAH1A. Acts as a mediator between p53/TP53 and BAX in a neuronal death pathway that is activated by DNA damage. Acts synergistically with TRAF2 and inhibits TNF induced apoptosis through activation of NF-kappa-B. Possesses a tumor suppressing activity in glioma cells. This is Paternally-expressed gene 3 protein (PEG3) from Homo sapiens (Human).